Reading from the N-terminus, the 633-residue chain is Transcriptional repressor p66-alpha (633 aa).

Over residues Met1–Asp18 the composition is skewed to basic and acidic residues. Disordered regions lie at residues Met1–Gly59 and Arg73–Gly119. Residues Thr20 and Thr49 each carry the phosphothreonine modification. Residues Arg86–Pro99 show a composition bias toward basic and acidic residues. Lys93 is covalently cross-linked (Glycyl lysine isopeptide (Lys-Gly) (interchain with G-Cter in SUMO2)). 5 positions are modified to phosphoserine: Ser100, Ser107, Ser113, Ser114, and Ser137. Positions Asp108 to Gly119 are enriched in polar residues. The stretch at Glu139–Ala174 forms a coiled coil. Positions Met144–Lys178 are CR1; interaction with HDAC1, HDAC2, MBD2 and MTA2. Over residues Lys172–Thr188 the composition is skewed to polar residues. Residues Lys172–Ala238 form a disordered region. Lys178 is covalently cross-linked (Glycyl lysine isopeptide (Lys-Gly) (interchain with G-Cter in SUMO2)). The interaction with ZMYND8 stretch occupies residues Gly181–Ala295. A Phosphothreonine modification is found at Thr189. The span at Gly196–Ala212 shows a compositional bias: polar residues. Residue Lys204 forms a Glycyl lysine isopeptide (Lys-Gly) (interchain with G-Cter in SUMO2) linkage. An Omega-N-methylarginine modification is found at Arg225. Residues Gln228 to Ala238 are compositionally biased toward polar residues. Lys233 is covalently cross-linked (Glycyl lysine isopeptide (Lys-Gly) (interchain with G-Cter in SUMO2)). Residues Arg249, Arg258, and Arg273 each carry the omega-N-methylarginine modification. A Phosphoserine modification is found at Ser275. The residue at position 285 (Arg285) is an Omega-N-methylarginine. 2 positions are modified to phosphoserine: Ser340 and Ser343. The CR2; histone tail-binding and interaction with CHD4 and CDK2AP1 stretch occupies residues Ser340–Gly480. The GATA-type zinc finger occupies Ser411 to Lys464. Residues Lys464 and Lys487 each participate in a glycyl lysine isopeptide (Lys-Gly) (interchain with G-Cter in SUMO2) cross-link. The residue at position 512 (Ser512) is a Phosphoserine. Arg539 carries the asymmetric dimethylarginine; alternate modification. Residue Arg539 is modified to Omega-N-methylarginine; alternate. A phosphoserine mark is found at Ser546 and Ser548. A Glycyl lysine isopeptide (Lys-Gly) (interchain with G-Cter in SUMO2) cross-link involves residue Lys550. Residue Ser556 is modified to Phosphoserine. Residues Val561–Lys585 are disordered. Residue Lys585 forms a Glycyl lysine isopeptide (Lys-Gly) (interchain with G-Cter in SUMO2) linkage. The residue at position 598 (Ser598) is a Phosphoserine. A Glycyl lysine isopeptide (Lys-Gly) (interchain with G-Cter in SUMO2) cross-link involves residue Lys605.

In terms of assembly, homooligomer. Component of the nucleosome remodeling and deacetylase (NuRD) repressor complex, composed of core proteins MTA1, MTA2, MTA3, RBBP4, RBBP7, HDAC1, HDAC2, MBD2, MBD3, and peripherally associated proteins CDK2AP1, CDK2AP2, GATAD2A, GATAD2B, CHD3, CHD4 and CHD5. The exact stoichiometry of the NuRD complex is unknown, and some subunits such as MBD2 and MBD3, GATAD2A and GATAD2B, and CHD3, CHD4 and CHD5 define mutually exclusive NuRD complexes. Component of the MeCP1 histone deacetylase complex. Interacts with CDK2AP1. Interacts with CHD4. Interacts with ERCC6. Interacts with HDAC1. Interacts with HDAC2. Interacts with MBD2; this interaction is required for the enhancement of MBD2-mediated repression and for targeting to the chromatin. Interacts with MBD3. Interacts with MTA2. Interacts with ZMYND8. Interacts with histone tails, including that of histones H2A, H2B, H3 and H4, the interaction is reduced by histone acetylation. Ubiquitous, both in fetal and adult tissues.

It is found in the nucleus speckle. The protein resides in the nucleus. Its subcellular location is the chromosome. Functionally, transcriptional repressor. Acts as a component of the histone deacetylase NuRD complex which participates in the remodeling of chromatin. Enhances MBD2-mediated repression. Efficient repression requires the presence of GATAD2B. This Homo sapiens (Human) protein is Transcriptional repressor p66-alpha (GATAD2A).